Consider the following 114-residue polypeptide: MSTENGTTDTTLAGTAEANTPFESKGKGKAAAESEDHPMGEAEDDEDDEDEDETEEPEAEEDNLEEIDPSNVISGPRTRQKEIDYAKAAQDLPAEEDDEEDDEEFVPEDEEMEE.

Over residues 1 to 22 (MSTENGTTDTTLAGTAEANTPF) the composition is skewed to polar residues. The segment at 1–114 (MSTENGTTDT…FVPEDEEMEE (114 aa)) is disordered. Basic and acidic residues predominate over residues 24–40 (SKGKGKAAAESEDHPMG). Composition is skewed to acidic residues over residues 41-68 (EAEDDEDDEDEDETEEPEAEEDNLEEID) and 93-114 (PAEEDDEEDDEEFVPEDEEMEE).

This sequence belongs to the CHZ1 family. In terms of assembly, forms a heterotrimer with H2A.Z-H2B, stabilizing the association of the histone dimer. Also, with a lower affinity, forms a heterotrimer with H2A-H2B.

Its subcellular location is the nucleus. Forms a chaperone-bound H2A.Z-H2B complex that acts as a source for SWR1 complex-dependent H2A to H2A.Z histone replacement in chromatin. In Neurospora crassa (strain ATCC 24698 / 74-OR23-1A / CBS 708.71 / DSM 1257 / FGSC 987), this protein is Histone H2A.Z-specific chaperone chz-1 (chz-1).